Here is a 162-residue protein sequence, read N- to C-terminus: Peptidyl-prolyl cis-trans isomerase-like 1 (162 aa).

The PPIase cyclophilin-type domain occupies methionine 1–valine 155.

It belongs to the cyclophilin-type PPIase family. PPIL1 subfamily.

The catalysed reaction is [protein]-peptidylproline (omega=180) = [protein]-peptidylproline (omega=0). PPIases accelerate the folding of proteins. It catalyzes the cis-trans isomerization of proline imidic peptide bonds in oligopeptides. The sequence is that of Peptidyl-prolyl cis-trans isomerase-like 1 (cyp1) from Emericella nidulans (strain FGSC A4 / ATCC 38163 / CBS 112.46 / NRRL 194 / M139) (Aspergillus nidulans).